The following is a 169-amino-acid chain: Mitochondrial ATP-independent inner membrane protease subunit 1b (169 aa).

Residues Ser-47 and Lys-91 contribute to the active site.

The protein belongs to the peptidase S26 family. IMP1 subfamily. In terms of assembly, heterodimer of 2 subunits, IMP1A/B and IMP12.

It is found in the mitochondrion inner membrane. Functionally, catalyzes the removal of transit peptides required for the targeting of proteins from the mitochondrial matrix, across the inner membrane, into the inter-membrane space. This Arabidopsis thaliana (Mouse-ear cress) protein is Mitochondrial ATP-independent inner membrane protease subunit 1b.